A 473-amino-acid polypeptide reads, in one-letter code: UDP-N-acetylmuramate--L-alanine ligase (473 aa).

An ATP-binding site is contributed by 122–128 (GTHGKTT).

The protein belongs to the MurCDEF family.

The protein resides in the cytoplasm. The catalysed reaction is UDP-N-acetyl-alpha-D-muramate + L-alanine + ATP = UDP-N-acetyl-alpha-D-muramoyl-L-alanine + ADP + phosphate + H(+). Its pathway is cell wall biogenesis; peptidoglycan biosynthesis. Functionally, cell wall formation. The polypeptide is UDP-N-acetylmuramate--L-alanine ligase (Teredinibacter turnerae (strain ATCC 39867 / T7901)).